Consider the following 1222-residue polypeptide: Serine/threonine-protein kinase WNK4 (1222 aa).

Residues 1–17 (MLAPRNTETGVHMSQTE) show a composition bias toward polar residues. A disordered region spans residues 1-163 (MLAPRNTETG…KEDTETQAVA (163 aa)). Residue Ser95 is modified to Phosphoserine. A compositionally biased stretch (basic and acidic residues) spans 135 to 152 (EPPRVPDAAARERRREQE). Glycyl lysine isopeptide (Lys-Gly) (interchain with G-Cter in ubiquitin) cross-links involve residues Lys154 and Lys172. The Protein kinase domain occupies 171 to 429 (LKFDIEIGRG…IQDLLTHAFF (259 aa)). Residue Ser181 coordinates ATP. Glycyl lysine isopeptide (Lys-Gly) (interchain with G-Cter in ubiquitin) cross-links involve residues Lys183, Lys223, and Lys238. Residues 251 to 254 (TELM) and Lys301 contribute to the ATP site. The Proton acceptor role is filled by Asp318. A Glycyl lysine isopeptide (Lys-Gly) (interchain with G-Cter in ubiquitin) cross-link involves residue Lys325. Residues Ser328 and Ser332 each carry the phosphoserine; by autocatalysis modification. Residues Lys384, Lys390, Lys447, and Lys451 each participate in a glycyl lysine isopeptide (Lys-Gly) (interchain with G-Cter in ubiquitin) cross-link. A disordered region spans residues 527–562 (LEVLPPDSGPPPATVSMTPGPPSAFPPEPEEPEADQ). Residues 533–553 (DSGPPPATVSMTPGPPSAFPP) show a composition bias toward pro residues. Residues 554–564 (EPEEPEADQHQ) are interaction with KLHL3. At Ser572 the chain carries Phosphoserine. 5 disordered regions span residues 591–612 (FLDA…PAEP), 626–679 (RSGP…SVSD), 747–809 (DAGP…GTPF), 836–873 (QVSS…SPLP), and 927–1087 (SPGL…QPSP). Positions 627-638 (SGPGSDFSPGDS) are enriched in low complexity. Over residues 659–672 (NPVKTLRRRPRSRL) the composition is skewed to basic residues. 2 stretches are compositionally biased toward low complexity: residues 792-809 (FSTS…GTPF) and 845-873 (APSS…SPLP). Pro residues predominate over residues 935 to 946 (PPAPPGPLPSMP). The span at 953 to 963 (DQESLSAQTAE) shows a compositional bias: polar residues. Lys990 is covalently cross-linked (Glycyl lysine isopeptide (Lys-Gly) (interchain with G-Cter in ubiquitin)). The RFXV motif signature appears at 996-999 (RFQV). At Ser1014 the chain carries Phosphoserine. The segment covering 1044-1056 (ETREALAESDRAA) has biased composition (basic and acidic residues). Residues 1076–1086 (GGSSPILSQPS) are compositionally biased toward polar residues. Glycyl lysine isopeptide (Lys-Gly) (interchain with G-Cter in ubiquitin) cross-links involve residues Lys1123, Lys1136, and Lys1137. The interval 1169 to 1222 (SKGSFPTSRRNSLQRSDLPGPGIMRRNSLSGSSTGSQEQRASKGVTFAGDVGRM) is disordered. Composition is skewed to polar residues over residues 1172–1183 (SFPTSRRNSLQR) and 1195–1207 (NSLS…SQEQ). Phosphoserine is present on Ser1196.

This sequence belongs to the protein kinase superfamily. Ser/Thr protein kinase family. WNK subfamily. As to quaternary structure, interacts with the C-terminal region of KCNJ1. Interacts with WNK1 and WNK3. Interacts with KLHL3. Requires Mg(2+) as cofactor. Autophosphorylated at Ser-328 and Ser-332, promoting its activation. Phosphorylated by WNK1 and WNK3. Phosphorylated at Ser-572 in a MAP3K15/ASK3-dependent process in response to osmotic stress or hypotonic low-chloride stimulation. In terms of processing, ubiquitinated by the BCR(KLHL3) complex, leading to its degradation. Also ubiquitinated by the BCR(KLHL2) complex.

It is found in the cell junction. The protein resides in the tight junction. The catalysed reaction is L-seryl-[protein] + ATP = O-phospho-L-seryl-[protein] + ADP + H(+). It carries out the reaction L-threonyl-[protein] + ATP = O-phospho-L-threonyl-[protein] + ADP + H(+). Activation requires autophosphorylation of Ser-328 and Ser-332. Autophosphorylation and subsequent activation is inhibited by increases in intracellular ionic strength: Cl(-) potently inhibits WNK4 kinase activity via direct binding. Also inhibited by K(+) ions. In terms of biological role, serine/threonine-protein kinase component of the WNK4-SPAK/OSR1 kinase cascade, which acts as a key regulator of ion transport in the distal nephron and blood pressure. The WNK4-SPAK/OSR1 kinase cascade is composed of WNK4, which mediates phosphorylation and activation of downstream kinases OXSR1/OSR1 and STK39/SPAK. Following activation, OXSR1/OSR1 and STK39/SPAK catalyze phosphorylation of ion cotransporters, such as SLC12A1/NKCC2, SLC12A2/NKCC1, SLC12A3/NCC, SLC12A5/KCC2 or SLC12A6/KCC3, regulating their activity. Acts as a molecular switch that regulates the balance between renal salt reabsorption and K(+) secretion by modulating the activities of renal transporters and channels, including the Na-Cl cotransporter SLC12A3/NCC and the K(+) channel, KCNJ1/ROMK. Regulates NaCl reabsorption in the distal nephron by activating the thiazide-sensitive Na-Cl cotransporter SLC12A3/NCC in distal convoluted tubule cells of kidney: activates SLC12A3/NCC in a OXSR1/OSR1- and STK39/SPAK-dependent process. Also acts as a scaffold protein independently of its protein kinase activity: negatively regulates cell membrane localization of various transporters and channels (CFTR, KCNJ1/ROMK, SLC4A4, SLC26A9 and TRPV4) by clathrin-dependent endocytosis. Also inhibits the activity of the epithelial Na(+) channel (ENaC) SCNN1A, SCNN1B, SCNN1D in a inase-independent mechanism. May also phosphorylate NEDD4L. The sequence is that of Serine/threonine-protein kinase WNK4 from Rattus norvegicus (Rat).